A 37-amino-acid polypeptide reads, in one-letter code: L-amino-acid oxidase (37 aa).

Belongs to the flavin monoamine oxidase family. FIG1 subfamily. As to quaternary structure, homodimer; non-covalently linked. The cofactor is FAD. Post-translationally, N-Glycosylated. In terms of tissue distribution, expressed by the venom gland.

It localises to the secreted. It carries out the reaction an L-alpha-amino acid + O2 + H2O = a 2-oxocarboxylate + H2O2 + NH4(+). The catalysed reaction is L-leucine + O2 + H2O = 4-methyl-2-oxopentanoate + H2O2 + NH4(+). It catalyses the reaction L-phenylalanine + O2 + H2O = 3-phenylpyruvate + H2O2 + NH4(+). The enzyme catalyses L-tryptophan + O2 + H2O = indole-3-pyruvate + H2O2 + NH4(+). It carries out the reaction L-methionine + O2 + H2O = 4-methylsulfanyl-2-oxobutanoate + H2O2 + NH4(+). The catalysed reaction is L-isoleucine + O2 + H2O = (S)-3-methyl-2-oxopentanoate + H2O2 + NH4(+). It catalyses the reaction L-arginine + O2 + H2O = 5-guanidino-2-oxopentanoate + H2O2 + NH4(+). The enzyme catalyses L-histidine + O2 + H2O = 3-(imidazol-5-yl)pyruvate + H2O2 + NH4(+). It carries out the reaction L-valine + O2 + H2O = 3-methyl-2-oxobutanoate + H2O2 + NH4(+). Functionally, catalyzes an oxidative deamination of predominantly hydrophobic and aromatic L-amino acids, thus producing hydrogen peroxide that may contribute to the diverse toxic effects of this enzyme. Is highly active on L-Leu, L-Met, moderately active on L-Arg, L-Trp, L-Phe, L-Val, L-His, and L-Ile, and is weakly or not active on L-Cys, L-Lys, L-Ala, L-Thr, L-Asp, L-Ser, and L-Pro. Exhibits diverse biological activities, such as hemorrhage, edema, apoptosis of vascular endothelial cells or tumor cell lines, as well as regulation of platelet aggregation. Effects of snake L-amino oxidases on platelets are controversial, since they either induce aggregation or inhibit agonist-induced aggregation. These different effects are probably due to different experimental conditions. This protein induce hemolysis and has antibacterial and antiparasitic activities (against the Gram-positive S.aureus). Tested in vivo, this protein significantly inhibits Ehrlich ascite tumors growth and induces an influx of polymorphonuclear cells, as well as spontaneous liberation of hydrogen peroxide from peritoneal macrophages. The protein is L-amino-acid oxidase of Bothrops jararaca (Jararaca).